A 430-amino-acid chain; its full sequence is tRNA(Ile)-lysidine synthase (430 aa).

An ATP-binding site is contributed by 21 to 26; sequence SGGLDS.

This sequence belongs to the tRNA(Ile)-lysidine synthase family.

Its subcellular location is the cytoplasm. The catalysed reaction is cytidine(34) in tRNA(Ile2) + L-lysine + ATP = lysidine(34) in tRNA(Ile2) + AMP + diphosphate + H(+). Functionally, ligates lysine onto the cytidine present at position 34 of the AUA codon-specific tRNA(Ile) that contains the anticodon CAU, in an ATP-dependent manner. Cytidine is converted to lysidine, thus changing the amino acid specificity of the tRNA from methionine to isoleucine. This Salmonella newport (strain SL254) protein is tRNA(Ile)-lysidine synthase.